We begin with the raw amino-acid sequence, 405 residues long: Glucose-1-phosphate adenylyltransferase 1 (405 aa).

Alpha-D-glucose 1-phosphate-binding positions include Tyr96, Gly161, 176–177 (EK), and Ser194.

This sequence belongs to the bacterial/plant glucose-1-phosphate adenylyltransferase family. Homotetramer.

It carries out the reaction alpha-D-glucose 1-phosphate + ATP + H(+) = ADP-alpha-D-glucose + diphosphate. Its pathway is glycan biosynthesis; glycogen biosynthesis. In terms of biological role, involved in the biosynthesis of ADP-glucose, a building block required for the elongation reactions to produce glycogen. Catalyzes the reaction between ATP and alpha-D-glucose 1-phosphate (G1P) to produce pyrophosphate and ADP-Glc. This chain is Glucose-1-phosphate adenylyltransferase 1, found in Vibrio vulnificus (strain CMCP6).